A 286-amino-acid polypeptide reads, in one-letter code: Single myb histone 5 (286 aa).

The HTH myb-type domain maps to 1-61; it reads MGAPKQRWTS…KWRNMNVIVT (61 aa). The segment at residues 28–57 is a DNA-binding region (H-T-H motif); the sequence is WRMILNDPELSSTLRYRSNVDLKDKWRNMN. In terms of domain architecture, H15 spans 122-190; sequence SHSRLDNIIM…KVNRKYRIAP (69 aa). Residues 229 to 277 adopt a coiled-coil conformation; the sequence is EAAAAAAAHAVAEAEAIMAEAEAAAREAEAAEAEARAAQAFAEAAVLTL.

The protein belongs to the histone H1/H5 family. SMH subfamily. As to quaternary structure, forms a homodimer and heterodimers.

It localises to the nucleus. Its subcellular location is the chromosome. It is found in the nucleolus. The protein resides in the telomere. Binds preferentially double-stranded telomeric repeats, but may also bind to the single telomeric strand. The protein is Single myb histone 5 (SMH5) of Zea mays (Maize).